We begin with the raw amino-acid sequence, 1904 residues long: Fatty acid synthase beta subunit hexB (1904 aa).

An acetyltransferase (AT) domain region spans residues Leu24–Gln395. The segment at Thr447–Asp691 is enoyl reductase (ER) domain. The interval Gly1001–Leu1491 is dehydratase (DH) domain. Residues Pro1399 to Thr1512 enclose the MaoC-like domain. The interval Tyr1530–Ser1893 is malonyl/palmitoyl transferase (MT/PT) domain.

This sequence belongs to the fungal fatty acid synthetase subunit beta family. As to quaternary structure, [Alpha(6)beta(6)] hexamers of two multifunctional subunits (alpha and beta).

It catalyses the reaction acetyl-CoA + n malonyl-CoA + 2n NADPH + 4n H(+) = a long-chain-acyl-CoA + n CoA + n CO2 + 2n NADP(+).. It carries out the reaction holo-[ACP] + acetyl-CoA = acetyl-[ACP] + CoA. The enzyme catalyses holo-[ACP] + malonyl-CoA = malonyl-[ACP] + CoA. The catalysed reaction is a (3R)-hydroxyacyl-[ACP] = a (2E)-enoyl-[ACP] + H2O. It catalyses the reaction a 2,3-saturated acyl-[ACP] + NAD(+) = a (2E)-enoyl-[ACP] + NADH + H(+). It carries out the reaction (9Z)-octadecenoyl-[ACP] + H2O = (9Z)-octadecenoate + holo-[ACP] + H(+). The protein operates within mycotoxin biosynthesis. Functionally, fatty acid synthase beta subunit; part of the fragmented gene cluster that mediates the biosynthesis of dothistromin (DOTH), a polyketide toxin very similar in structure to the aflatoxin precursor, versicolorin B. The first step of the pathway is the conversion of acetate to norsolorinic acid (NOR) and requires the fatty acid synthase subunits hexA and hexB, as well as the polyketide synthase pksA. PksA combines a hexanoyl starter unit and 7 malonyl-CoA extender units to synthesize the precursor NOR. The hexanoyl starter unit is provided to the acyl-carrier protein (ACP) domain by the fungal fatty acid synthase hexA/hexB. The second step is the conversion of NOR to averantin (AVN) and requires the norsolorinic acid ketoreductase nor1, which catalyzes the dehydration of norsolorinic acid to form (1'S)-averantin. The cytochrome P450 monooxygenase avnA then catalyzes the hydroxylation of AVN to 5'hydroxyaverantin (HAVN). The next step is performed by adhA that transforms HAVN to averufin (AVF). Averufin might then be converted to hydroxyversicolorone by cypX and avfA. Hydroxyversicolorone is further converted versiconal hemiacetal acetate (VHA) by moxY. VHA is then the substrate for the versiconal hemiacetal acetate esterase est1 to yield versiconal (VAL). Versicolorin B synthase vbsA then converts VAL to versicolorin B (VERB) by closing the bisfuran ring. Then, the activity of the versicolorin B desaturase verB leads to versicolorin A (VERA). DotB, a predicted chloroperoxidase, may perform epoxidation of the A-ring of VERA. Alternatively, a cytochrome P450, such as cypX or avnA could catalyze this step. It is also possible that another, uncharacterized, cytochrome P450 enzyme is responsible for this step. Opening of the epoxide could potentially be achieved by the epoxide hydrolase epoA. However, epoA seems not to be required for DOTH biosynthesis, but other epoxide hydrolases may have the ability to complement this hydrolysis. Alternatively, opening of the epoxide ring could be achieved non-enzymatically. The next step is the deoxygenation of ring A to yield the 5,8-dihydroxyanthraquinone which is most likely catalyzed by the NADPH dehydrogenase encoded by ver1. The last stages of DOTH biosynthesis are proposed to involve hydroxylation of the bisfuran. OrdB and norB might have oxidative roles here. An alternative possibility is that cytochrome P450 monoogenases such as avnA and cypX might perform these steps in addition to previously proposed steps. The sequence is that of Fatty acid synthase beta subunit hexB from Dothistroma septosporum (strain NZE10 / CBS 128990) (Red band needle blight fungus).